The following is a 358-amino-acid chain: 3-dehydroquinate synthase (358 aa).

Residues D70–K75, G104–D108, T128–T129, K141, K150, and C168–T171 each bind NAD(+). 3 residues coordinate Zn(2+): E183, H246, and H263.

The protein belongs to the sugar phosphate cyclases superfamily. Dehydroquinate synthase family. Co(2+) is required as a cofactor. Requires Zn(2+) as cofactor. It depends on NAD(+) as a cofactor.

The protein localises to the cytoplasm. It catalyses the reaction 7-phospho-2-dehydro-3-deoxy-D-arabino-heptonate = 3-dehydroquinate + phosphate. Its pathway is metabolic intermediate biosynthesis; chorismate biosynthesis; chorismate from D-erythrose 4-phosphate and phosphoenolpyruvate: step 2/7. Functionally, catalyzes the conversion of 3-deoxy-D-arabino-heptulosonate 7-phosphate (DAHP) to dehydroquinate (DHQ). The polypeptide is 3-dehydroquinate synthase (Shewanella baltica (strain OS185)).